The sequence spans 94 residues: Small ribosomal subunit protein uS19c (94 aa).

Belongs to the universal ribosomal protein uS19 family.

It localises to the plastid. Its subcellular location is the chloroplast. Protein S19 forms a complex with S13 that binds strongly to the 16S ribosomal RNA. The sequence is that of Small ribosomal subunit protein uS19c from Pleurastrum terricola (Filamentous green alga).